The chain runs to 116 residues: Nucleoid-associated protein PMM0020 (116 aa).

Residues 87-98 (ESSTTTMKERMN) show a composition bias toward basic and acidic residues. The disordered stretch occupies residues 87–116 (ESSTTTMKERMNDLTGGLNLNLPGLDNNDS). Low complexity predominate over residues 99-116 (DLTGGLNLNLPGLDNNDS).

This sequence belongs to the YbaB/EbfC family. As to quaternary structure, homodimer.

The protein resides in the cytoplasm. It localises to the nucleoid. Its function is as follows. Binds to DNA and alters its conformation. May be involved in regulation of gene expression, nucleoid organization and DNA protection. In Prochlorococcus marinus subsp. pastoris (strain CCMP1986 / NIES-2087 / MED4), this protein is Nucleoid-associated protein PMM0020.